The chain runs to 371 residues: Alanine dehydrogenase (371 aa).

Residues Arg-15 and Lys-75 each coordinate substrate. The active-site Proton donor/acceptor is His-96. NAD(+) is bound by residues Ser-134, 178–179, Asp-198, Lys-203, Ser-220, 239–240, 267–270, Arg-279, and 298–301; these read TA, VL, IAID, and VANM. Catalysis depends on Asp-270, which acts as the Proton donor/acceptor. Residues Glu-323 and His-327 each contribute to the Mg(2+) site.

This sequence belongs to the AlaDH/PNT family. Homohexamer. Trimer of dimers. Mg(2+) is required as a cofactor.

The protein localises to the secreted. The enzyme catalyses L-alanine + NAD(+) + H2O = pyruvate + NH4(+) + NADH + H(+). The protein operates within amino-acid degradation; L-alanine degradation via dehydrogenase pathway; NH(3) and pyruvate from L-alanine: step 1/1. In terms of biological role, catalyzes the reversible reductive amination of pyruvate to L-alanine. However, since the physiological environment of M.tuberculosis has a neutral pH, it can be assumed that the enzyme catalyzes exclusively the formation of L-alanine. May play a role in cell wall synthesis as L-alanine is an important constituent of the peptidoglycan layer. The protein is Alanine dehydrogenase (ald) of Mycobacterium tuberculosis (strain CDC 1551 / Oshkosh).